We begin with the raw amino-acid sequence, 294 residues long: 33 kDa chaperonin (294 aa).

2 disulfide bridges follow: Cys239-Cys241 and Cys272-Cys275.

Belongs to the HSP33 family. In terms of processing, under oxidizing conditions two disulfide bonds are formed involving the reactive cysteines. Under reducing conditions zinc is bound to the reactive cysteines and the protein is inactive.

It is found in the cytoplasm. Redox regulated molecular chaperone. Protects both thermally unfolding and oxidatively damaged proteins from irreversible aggregation. Plays an important role in the bacterial defense system toward oxidative stress. The chain is 33 kDa chaperonin from Listeria innocua serovar 6a (strain ATCC BAA-680 / CLIP 11262).